We begin with the raw amino-acid sequence, 101 residues long: Small ribosomal subunit protein uS14 (101 aa).

This sequence belongs to the universal ribosomal protein uS14 family. Part of the 30S ribosomal subunit. Contacts proteins S3 and S10.

Its function is as follows. Binds 16S rRNA, required for the assembly of 30S particles and may also be responsible for determining the conformation of the 16S rRNA at the A site. This Escherichia coli O139:H28 (strain E24377A / ETEC) protein is Small ribosomal subunit protein uS14.